The chain runs to 651 residues: Acetyl-coenzyme A synthetase (651 aa).

Residues 193–196 (RRGK) and T312 contribute to the CoA site. Residues 388–390 (GEP), 412–417 (DTWWQT), D501, and R516 each bind ATP. S524 lines the CoA pocket. The Mg(2+) site is built by V538, H540, and V543. Residue K610 is modified to N6-acetyllysine.

The protein belongs to the ATP-dependent AMP-binding enzyme family. It depends on Mg(2+) as a cofactor. Post-translationally, acetylated. Deacetylation by the SIR2-homolog deacetylase activates the enzyme.

It catalyses the reaction acetate + ATP + CoA = acetyl-CoA + AMP + diphosphate. In terms of biological role, catalyzes the conversion of acetate into acetyl-CoA (AcCoA), an essential intermediate at the junction of anabolic and catabolic pathways. AcsA undergoes a two-step reaction. In the first half reaction, AcsA combines acetate with ATP to form acetyl-adenylate (AcAMP) intermediate. In the second half reaction, it can then transfer the acetyl group from AcAMP to the sulfhydryl group of CoA, forming the product AcCoA. In Streptomyces coelicolor (strain ATCC BAA-471 / A3(2) / M145), this protein is Acetyl-coenzyme A synthetase.